Here is a 738-residue protein sequence, read N- to C-terminus: 1,4-alpha-glucan branching enzyme GlgB (738 aa).

D399 acts as the Nucleophile in catalysis. E452 serves as the catalytic Proton donor.

This sequence belongs to the glycosyl hydrolase 13 family. GlgB subfamily. Monomer.

It carries out the reaction Transfers a segment of a (1-&gt;4)-alpha-D-glucan chain to a primary hydroxy group in a similar glucan chain.. Its pathway is glycan biosynthesis; glycogen biosynthesis. Its function is as follows. Catalyzes the formation of the alpha-1,6-glucosidic linkages in glycogen by scission of a 1,4-alpha-linked oligosaccharide from growing alpha-1,4-glucan chains and the subsequent attachment of the oligosaccharide to the alpha-1,6 position. The polypeptide is 1,4-alpha-glucan branching enzyme GlgB (Chlamydia trachomatis serovar L2b (strain UCH-1/proctitis)).